Here is a 126-residue protein sequence, read N- to C-terminus: uncharacterized protein (126 aa).

This is an uncharacterized protein from Mycoplasmopsis pulmonis (strain UAB CTIP) (Mycoplasma pulmonis).